A 185-amino-acid chain; its full sequence is Elongation factor P (185 aa).

Belongs to the elongation factor P family.

Its subcellular location is the cytoplasm. The protein operates within protein biosynthesis; polypeptide chain elongation. Its function is as follows. Involved in peptide bond synthesis. Stimulates efficient translation and peptide-bond synthesis on native or reconstituted 70S ribosomes in vitro. Probably functions indirectly by altering the affinity of the ribosome for aminoacyl-tRNA, thus increasing their reactivity as acceptors for peptidyl transferase. The polypeptide is Elongation factor P (Dechloromonas aromatica (strain RCB)).